Consider the following 661-residue polypeptide: WD repeat-containing protein 26 (661 aa).

Residues 1–27 show a composition bias toward gly residues; it reads MQANGAGGGGGGGGGGGGGGGGGGGQG. 2 disordered regions span residues 1–70 and 99–118; these read MQAN…ASNN and TAAS…KKKK. 2 stretches are compositionally biased toward low complexity: residues 56 to 70 and 99 to 113; these read ANGL…ASNN and TAAS…LGSS. Residues S121 and S123 each carry the phosphoserine modification. The 33-residue stretch at 123 to 155 folds into the LisH domain; sequence SDEDVIRLIGQHLNGLGLNQTVDLLMQESGCRL. The CTLH domain maps to 156–231; sequence EHPSATKFRN…EYLEDGKVLE (76 aa). 6 WD repeats span residues 353–392, 399–438, 444–484, 524–563, 566–608, and 611–651; these read EHCN…HLLK, GHAY…GELR, SHED…DSWE, QEDH…LVRK, GVTQ…PIAE, and GHTR…DHQN.

In terms of assembly, forms homooligomers. Identified in the CTLH complex that contains GID4, RANBP9 and/or RANBP10, MKLN1, MAEA, RMND5A (or alternatively its paralog RMND5B), GID8, ARMC8, WDR26 and YPEL5. Within this complex, MAEA, RMND5A (or alternatively its paralog RMND5B), GID8, WDR26, and RANBP9 and/or RANBP10 form the catalytic core, while GID4, MKLN1, ARMC8 and YPEL5 have ancillary roles. Interacts with DDB1-CUL4A/B E3 ligase complexes. Forms a complex composed of at least WDR26, a G-beta:gamma unit, and PLCB2. Interacts with AXIN1. As to expression, broadly expressed, with highest levels in heart and skeletal muscle.

The protein resides in the cytoplasm. It is found in the nucleus. Its subcellular location is the mitochondrion. G-beta-like protein involved in cell signal transduction. Acts as a negative regulator in MAPK signaling pathway. Functions as a scaffolding protein to promote G beta:gamma-mediated PLCB2 plasma membrane translocation and subsequent activation in leukocytes. Core component of the CTLH E3 ubiquitin-protein ligase complex that selectively accepts ubiquitin from UBE2H and mediates ubiquitination and subsequent proteasomal degradation of the transcription factor HBP1. Acts as a negative regulator of the canonical Wnt signaling pathway through preventing ubiquitination of beta-catenin CTNNB1 by the beta-catenin destruction complex, thus negatively regulating CTNNB1 degradation. Serves as a scaffold to coordinate PI3K/AKT pathway-driven cell growth and migration. Protects cells from oxidative stress-induced apoptosis via the down-regulation of AP-1 transcriptional activity as well as by inhibiting cytochrome c release from mitochondria. Also protects cells by promoting hypoxia-mediated autophagy and mitophagy. The polypeptide is WD repeat-containing protein 26 (WDR26) (Homo sapiens (Human)).